The following is a 141-amino-acid chain: ATP synthase epsilon chain (141 aa).

The protein belongs to the ATPase epsilon chain family. In terms of assembly, F-type ATPases have 2 components, CF(1) - the catalytic core - and CF(0) - the membrane proton channel. CF(1) has five subunits: alpha(3), beta(3), gamma(1), delta(1), epsilon(1). CF(0) has three main subunits: a, b and c.

It is found in the cell inner membrane. Produces ATP from ADP in the presence of a proton gradient across the membrane. The protein is ATP synthase epsilon chain of Dechloromonas aromatica (strain RCB).